The following is a 409-amino-acid chain: Putative competence-damage inducible protein (409 aa).

This sequence belongs to the CinA family.

The sequence is that of Putative competence-damage inducible protein from Clostridium botulinum (strain Kyoto / Type A2).